A 338-amino-acid polypeptide reads, in one-letter code: Putative transposase for insertion sequence element IS4SA (338 aa).

It belongs to the transposase 11 family.

The protein is Putative transposase for insertion sequence element IS4SA of Synechocystis sp. (strain ATCC 27184 / PCC 6803 / Kazusa).